A 154-amino-acid polypeptide reads, in one-letter code: Proteasome subunit beta type-4 (154 aa).

Met1 is modified (N-acetylmethionine). Residues 1 to 45 (MESILESRSGHWAGGPAPGQFYRIPPTPGSIVDPXSVLYGSPITR) constitute a propeptide that is removed on maturation. Tyr102 bears the Phosphotyrosine mark.

This sequence belongs to the peptidase T1B family. As to quaternary structure, the 26S proteasome consists of a 20S proteasome core and two 19S regulatory subunits. The 20S proteasome core is a barrel-shaped complex made of 28 subunits that are arranged in four stacked rings. The two outer rings are each formed by seven alpha subunits, and the two inner rings are formed by seven beta subunits. The proteolytic activity is exerted by three beta-subunits PSMB5, PSMB6 and PSMB7. Forms a ternary complex with SMAD1 and OAZ1 before PSMB4 is incorporated into the 20S proteasome. Interacts with PRPF19.

It is found in the cytoplasm. Its subcellular location is the nucleus. Its function is as follows. Non-catalytic component of the 20S core proteasome complex involved in the proteolytic degradation of most intracellular proteins. This complex plays numerous essential roles within the cell by associating with different regulatory particles. Associated with two 19S regulatory particles, forms the 26S proteasome and thus participates in the ATP-dependent degradation of ubiquitinated proteins. The 26S proteasome plays a key role in the maintenance of protein homeostasis by removing misfolded or damaged proteins that could impair cellular functions, and by removing proteins whose functions are no longer required. Associated with the PA200 or PA28, the 20S proteasome mediates ubiquitin-independent protein degradation. This type of proteolysis is required in several pathways including spermatogenesis (20S-PA200 complex) or generation of a subset of MHC class I-presented antigenic peptides (20S-PA28 complex). SMAD1/OAZ1/PSMB4 complex mediates the degradation of the CREBBP/EP300 repressor SNIP1. This chain is Proteasome subunit beta type-4 (PSMB4), found in Sus scrofa (Pig).